We begin with the raw amino-acid sequence, 206 residues long: RNA pyrophosphohydrolase (206 aa).

Residues 6-149 (GYRPNVGIVL…KRGVYARALR (144 aa)) enclose the Nudix hydrolase domain. The Nudix box signature appears at 38-59 (GGMNTDETPVEAMYRELQEETG). The tract at residues 175-206 (MPGHTAGHDRPRKRPRTRGYWPKKATGDGPAS) is disordered.

Belongs to the Nudix hydrolase family. RppH subfamily. The cofactor is a divalent metal cation.

In terms of biological role, accelerates the degradation of transcripts by removing pyrophosphate from the 5'-end of triphosphorylated RNA, leading to a more labile monophosphorylated state that can stimulate subsequent ribonuclease cleavage. This is RNA pyrophosphohydrolase from Stenotrophomonas maltophilia (strain K279a).